The primary structure comprises 303 residues: Recombination-associated protein RdgC (303 aa).

The protein belongs to the RdgC family.

Its subcellular location is the cytoplasm. It localises to the nucleoid. May be involved in recombination. The sequence is that of Recombination-associated protein RdgC from Enterobacter sp. (strain 638).